Consider the following 535-residue polypeptide: Beta-glucosidase 20 (535 aa).

Residues 1-24 (MGRFHKFPLLGLVLFLGLTGSLIA) form the signal peptide. 2 residues coordinate a beta-D-glucoside: glutamine 56 and histidine 159. Asparagine 187 carries N-linked (GlcNAc...) asparagine glycosylation. Residue 204 to 205 (NE) coordinates a beta-D-glucoside. Glutamate 205 functions as the Proton donor in the catalytic mechanism. A disulfide bond links cysteine 224 and cysteine 235. Positions 351 and 424 each coordinate a beta-D-glucoside. The active-site Nucleophile is the glutamate 424. Asparagine 468 carries an N-linked (GlcNAc...) asparagine glycan. Residues tryptophan 475, 482 to 483 (EW), and phenylalanine 491 each bind a beta-D-glucoside. A glycan (N-linked (GlcNAc...) asparagine) is linked at asparagine 501. Positions 532–535 (HDEL) match the Prevents secretion from ER motif.

The protein belongs to the glycosyl hydrolase 1 family.

It localises to the endoplasmic reticulum lumen. The enzyme catalyses Hydrolysis of terminal, non-reducing beta-D-glucosyl residues with release of beta-D-glucose.. The chain is Beta-glucosidase 20 from Arabidopsis thaliana (Mouse-ear cress).